The sequence spans 289 residues: Glycine-rich RNA-binding protein 5, mitochondrial (289 aa).

The transit peptide at 1–31 directs the protein to the mitochondrion; it reads MAFLSKVGRLFSQTSSHVTASSSMLQSIRCM. One can recognise an RRM domain in the interval 34–111; sequence SKIFVGGISY…RRIRVNYATE (78 aa). The segment at 219–289 is disordered; that stretch reads QGSSTNAGFD…TDDGDVAKRA (71 aa). Over residues 257-272 the composition is skewed to polar residues; it reads GSDNQFGDAENGNTEN.

It belongs to the GR-RBP family. In terms of assembly, homodimer. Interacts with MORF8/RIP1 AND RBG3/ORRM3. Binds to RBG2/ORRM5.

Its subcellular location is the mitochondrion. Its function is as follows. Possibly has a role in RNA transcription or processing during stress. Binds RNAs and DNAs sequence with a preference to single-stranded nucleic acids. Displays strong affinity to poly(U) sequence. Involved in C-to-U editing of mitochondrial RNA. Functions as a major mitochondrial editing factor. Controls 44 percent of the mitochondrial editing sites. The chain is Glycine-rich RNA-binding protein 5, mitochondrial from Arabidopsis thaliana (Mouse-ear cress).